Reading from the N-terminus, the 123-residue chain is Small ribosomal subunit protein uS12 (123 aa).

Position 89 is a 3-methylthioaspartic acid (D89). The disordered stretch occupies residues 100 to 123; the sequence is GSLDTSGVKGRNQGRSKYGTKRPK. Residues 111–123 are compositionally biased toward basic residues; that stretch reads NQGRSKYGTKRPK.

The protein belongs to the universal ribosomal protein uS12 family. Part of the 30S ribosomal subunit. Contacts proteins S8 and S17. May interact with IF1 in the 30S initiation complex.

With S4 and S5 plays an important role in translational accuracy. Its function is as follows. Interacts with and stabilizes bases of the 16S rRNA that are involved in tRNA selection in the A site and with the mRNA backbone. Located at the interface of the 30S and 50S subunits, it traverses the body of the 30S subunit contacting proteins on the other side and probably holding the rRNA structure together. The combined cluster of proteins S8, S12 and S17 appears to hold together the shoulder and platform of the 30S subunit. This Pseudomonas fluorescens (strain ATCC BAA-477 / NRRL B-23932 / Pf-5) protein is Small ribosomal subunit protein uS12.